Consider the following 271-residue polypeptide: NADPH-dependent 7-cyano-7-deazaguanine reductase (271 aa).

81–83 (IES) is a binding site for substrate. 83-84 (SK) lines the NADPH pocket. Catalysis depends on C177, which acts as the Thioimide intermediate. The active-site Proton donor is the D184. 216–217 (HE) contacts substrate. NADPH is bound at residue 245-246 (RG).

Belongs to the GTP cyclohydrolase I family. QueF type 2 subfamily. In terms of assembly, homodimer.

It is found in the cytoplasm. The catalysed reaction is 7-aminomethyl-7-carbaguanine + 2 NADP(+) = 7-cyano-7-deazaguanine + 2 NADPH + 3 H(+). Its pathway is tRNA modification; tRNA-queuosine biosynthesis. In terms of biological role, catalyzes the NADPH-dependent reduction of 7-cyano-7-deazaguanine (preQ0) to 7-aminomethyl-7-deazaguanine (preQ1). The sequence is that of NADPH-dependent 7-cyano-7-deazaguanine reductase from Xanthomonas campestris pv. campestris (strain B100).